The following is a 379-amino-acid chain: MSNDKDSMNMSDLSTALNEEDRAGLVNALKNKLQNLAGQHSDVLENLTPPVRKRVEFLREIQNQYDEMEAKFFEERAALEAKYQKLYQPLYTKRYEIVNGVVEVEGAAEEVKSEQGEDKSAEEKGVPDFWLIALKNNEITAEEITERDEGALKYLKDIKWSRVEEPKGFKLEFFFDQNPYFKNTVLTKTYHMIDEDEPILEKALGTEIEWYPGKCLTQKILKKKPKKGSKNTKPITKTEDCESFFNFFSPPQVPDDDEDLDDDMADELQGQMEHDYDIGSTIKEKIISHAVSWFTGEAVEADDLDIEDDDDEIDEDDDEEDEEDDEDDEEEDDEDDDEEEEADQGKKSKKKSSAGHKKAGRSQLAEGQAGERPPECKQQ.

A coiled-coil region spans residues 26-80; that stretch reads VNALKNKLQNLAGQHSDVLENLTPPVRKRVEFLREIQNQYDEMEAKFFEERAALE. Ser41 carries the post-translational modification Phosphoserine. The short motif at 47-62 is the Nuclear export signal element; it reads LTPPVRKRVEFLREIQ. Residues 222–227 carry the Nuclear localization signal motif; that stretch reads KKKPKK. The interval 298–379 is disordered; sequence AVEADDLDIE…GERPPECKQQ (82 aa). The span at 299 to 342 shows a compositional bias: acidic residues; that stretch reads VEADDLDIEDDDDEIDEDDDEEDEEDDEDDEEEDDEDDDEEEEA. The segment covering 347 to 360 has biased composition (basic residues); that stretch reads KSKKKSSAGHKKAG. At Cys376 the chain carries Cysteine methyl ester. Cys376 carries S-farnesyl cysteine lipidation. Residues 377 to 379 constitute a propeptide, removed in mature form; the sequence is KQQ.

It belongs to the nucleosome assembly protein (NAP) family. Can form homomeric and heteromeric protein complexes with NAP1;1, NAP1;3 and NAP1;4. Binds histone H2A. Ubiquitous.

It localises to the nucleus. The protein resides in the cytoplasm. In terms of biological role, may modulate chromatin structure by regulation of nucleosome assembly/disassembly. May function in nucleotide excision repair (NER). Involved in somatic homologous recombination. In Arabidopsis thaliana (Mouse-ear cress), this protein is Nucleosome assembly protein 1;2 (NAP1;2).